A 188-amino-acid chain; its full sequence is Elongation factor P (188 aa).

The protein belongs to the elongation factor P family.

It localises to the cytoplasm. It participates in protein biosynthesis; polypeptide chain elongation. Involved in peptide bond synthesis. Stimulates efficient translation and peptide-bond synthesis on native or reconstituted 70S ribosomes in vitro. Probably functions indirectly by altering the affinity of the ribosome for aminoacyl-tRNA, thus increasing their reactivity as acceptors for peptidyl transferase. This chain is Elongation factor P, found in Bacteroides thetaiotaomicron (strain ATCC 29148 / DSM 2079 / JCM 5827 / CCUG 10774 / NCTC 10582 / VPI-5482 / E50).